The sequence spans 295 residues: Ribosome production factor 1 (295 aa).

A disordered region spans residues 24–47 (HEKNKERHTMRRKRAKEERENPEL). Positions 38-47 (AKEERENPEL) are enriched in basic and acidic residues. In terms of domain architecture, Brix spans 93–276 (PKIFLTTNVN…LKRLQRGIKE (184 aa)). An RNA-binding region spans residues 254-271 (VGLQELGPQFTLKLKRLQ).

Part of a complex that includes BRX1, RPF1, RPF2 and SSF1 or SSF2.

The protein localises to the nucleus. The protein resides in the nucleolus. Functionally, essential protein. Required for biogenesis of the 60S ribosomal subunit. In Saccharomyces cerevisiae (strain ATCC 204508 / S288c) (Baker's yeast), this protein is Ribosome production factor 1 (RPF1).